Reading from the N-terminus, the 399-residue chain is Lipoyl synthase, mitochondrial (399 aa).

A mitochondrion-targeting transit peptide spans 1-14; the sequence is MALISRSCGAASRY. Residues 39–52 show a composition bias toward low complexity; that stretch reads AASTSSSSSPSPST. The interval 39-60 is disordered; it reads AASTSSSSSPSPSTHNDRKKDL. [4Fe-4S] cluster is bound by residues C128, C133, C139, C159, C163, C166, and S374. One can recognise a Radical SAM core domain in the interval 144–363; the sequence is EYATATATIM…EKVGQEMGFI (220 aa).

The protein belongs to the radical SAM superfamily. Lipoyl synthase family. It depends on [4Fe-4S] cluster as a cofactor.

The protein resides in the mitochondrion. It carries out the reaction [[Fe-S] cluster scaffold protein carrying a second [4Fe-4S](2+) cluster] + N(6)-octanoyl-L-lysyl-[protein] + 2 oxidized [2Fe-2S]-[ferredoxin] + 2 S-adenosyl-L-methionine + 4 H(+) = [[Fe-S] cluster scaffold protein] + N(6)-[(R)-dihydrolipoyl]-L-lysyl-[protein] + 4 Fe(3+) + 2 hydrogen sulfide + 2 5'-deoxyadenosine + 2 L-methionine + 2 reduced [2Fe-2S]-[ferredoxin]. Its pathway is protein modification; protein lipoylation via endogenous pathway; protein N(6)-(lipoyl)lysine from octanoyl-[acyl-carrier-protein]: step 2/2. Its function is as follows. Catalyzes the radical-mediated insertion of two sulfur atoms into the C-6 and C-8 positions of the octanoyl moiety bound to the lipoyl domains of lipoate-dependent enzymes, thereby converting the octanoylated domains into lipoylated derivatives. This Danio rerio (Zebrafish) protein is Lipoyl synthase, mitochondrial (lias).